The sequence spans 302 residues: tRNA pseudouridine synthase B (302 aa).

Residue Asp-38 is the Nucleophile of the active site.

It belongs to the pseudouridine synthase TruB family. Type 1 subfamily.

It catalyses the reaction uridine(55) in tRNA = pseudouridine(55) in tRNA. Responsible for synthesis of pseudouridine from uracil-55 in the psi GC loop of transfer RNAs. The sequence is that of tRNA pseudouridine synthase B from Geobacillus thermodenitrificans (strain NG80-2).